Reading from the N-terminus, the 548-residue chain is Eukaryotic translation initiation factor 3 subunit D (548 aa).

K53 is subject to N6-acetyllysine. Phosphoserine is present on S161. Positions 285–299 (DFDLLTVSETANEPP) are RNA gate. The tract at residues 523–548 (PDGTFSSDEDDEEEEEEEEEEEEEEA) is disordered. Residues S528 and S529 each carry the phosphoserine modification. Over residues 529–548 (SDEDDEEEEEEEEEEEEEEA) the composition is skewed to acidic residues.

It belongs to the eIF-3 subunit D family. Component of the eukaryotic translation initiation factor 3 (eIF-3) complex, which is composed of 13 subunits: EIF3A, EIF3B, EIF3C, EIF3D, EIF3E, EIF3F, EIF3G, EIF3H, EIF3I, EIF3J, EIF3K, EIF3L and EIF3M. The eIF-3 complex appears to include 3 stable modules: module A is composed of EIF3A, EIF3B, EIF3G and EIF3I; module B is composed of EIF3F, EIF3H, and EIF3M; and module C is composed of EIF3C, EIF3D, EIF3E, EIF3K and EIF3L. EIF3C of module C binds EIF3B of module A and EIF3H of module B, thereby linking the three modules. EIF3J is a labile subunit that binds to the eIF-3 complex via EIF3B. The eIF-3 complex interacts with RPS6KB1 under conditions of nutrient depletion. Mitogenic stimulation leads to binding and activation of a complex composed of MTOR and RPTOR, leading to phosphorylation and release of RPS6KB1 and binding of EIF4B to eIF-3.

It is found in the cytoplasm. Its function is as follows. mRNA cap-binding component of the eukaryotic translation initiation factor 3 (eIF-3) complex, a complex required for several steps in the initiation of protein synthesis of a specialized repertoire of mRNAs. The eIF-3 complex associates with the 40S ribosome and facilitates the recruitment of eIF-1, eIF-1A, eIF-2:GTP:methionyl-tRNAi and eIF-5 to form the 43S pre-initiation complex (43S PIC). The eIF-3 complex stimulates mRNA recruitment to the 43S PIC and scanning of the mRNA for AUG recognition. The eIF-3 complex is also required for disassembly and recycling of post-termination ribosomal complexes and subsequently prevents premature joining of the 40S and 60S ribosomal subunits prior to initiation. The eIF-3 complex specifically targets and initiates translation of a subset of mRNAs involved in cell proliferation, including cell cycling, differentiation and apoptosis, and uses different modes of RNA stem-loop binding to exert either translational activation or repression. In the eIF-3 complex, EIF3D specifically recognizes and binds the 7-methylguanosine cap of a subset of mRNAs. This is Eukaryotic translation initiation factor 3 subunit D from Bos taurus (Bovine).